The chain runs to 222 residues: Glutathione-specific gamma-glutamylcyclotransferase 1 (222 aa).

A compositionally biased stretch (low complexity) spans 1-22 (MKQESAAPNTPPTSQSPTPSAQ). The interval 1 to 24 (MKQESAAPNTPPTSQSPTPSAQFP) is disordered. 35-40 (IFGYGS) is a substrate binding site. Residue glutamate 115 is the Proton acceptor of the active site.

It belongs to the gamma-glutamylcyclotransferase family. ChaC subfamily. Interacts with NOTCH1 (via extracellular region).

It is found in the cytoplasm. The protein resides in the cytosol. Its subcellular location is the golgi apparatus. The protein localises to the trans-Golgi network. It catalyses the reaction glutathione = L-cysteinylglycine + 5-oxo-L-proline. Its function is as follows. Catalyzes the cleavage of glutathione into 5-oxo-L-proline and a Cys-Gly dipeptide. Acts specifically on glutathione, but not on other gamma-glutamyl peptides. Glutathione depletion is an important factor for apoptosis initiation and execution. Acts as a pro-apoptotic component of the unfolded protein response pathway by mediating the pro-apoptotic effects of the ATF4-ATF3-DDIT3/CHOP cascade. Negative regulator of Notch signaling pathway involved in embryonic neurogenesis: acts by inhibiting Notch cleavage by furin, maintaining Notch in an immature inactive form, thereby promoting neurogenesis in embryos. This chain is Glutathione-specific gamma-glutamylcyclotransferase 1, found in Homo sapiens (Human).